Consider the following 217-residue polypeptide: tRNA (guanine-N(7)-)-methyltransferase (217 aa).

Residues Glu48, Glu73, Asn100, and Asp123 each coordinate S-adenosyl-L-methionine. The active site involves Asp123. Substrate-binding residues include Lys127 and Asp159.

It belongs to the class I-like SAM-binding methyltransferase superfamily. TrmB family.

The catalysed reaction is guanosine(46) in tRNA + S-adenosyl-L-methionine = N(7)-methylguanosine(46) in tRNA + S-adenosyl-L-homocysteine. It participates in tRNA modification; N(7)-methylguanine-tRNA biosynthesis. Catalyzes the formation of N(7)-methylguanine at position 46 (m7G46) in tRNA. In Leptospira interrogans serogroup Icterohaemorrhagiae serovar copenhageni (strain Fiocruz L1-130), this protein is tRNA (guanine-N(7)-)-methyltransferase.